Reading from the N-terminus, the 274-residue chain is Caldesmon, smooth muscle (274 aa).

Disordered regions lie at residues 1–102 (SNLK…FSPK) and 179–274 (KGNV…EKEP). Basic and acidic residues-rich tracts occupy residues 12-21 (GSEKLKEKQQ) and 28-95 (DELK…EKKP). Positions 182 to 194 (VFSSPGGTGTPNK) are enriched in polar residues. Basic and acidic residues-rich tracts occupy residues 226–245 (SDLR…KQSV) and 260–274 (KKSE…EKEP).

The protein resides in the cytoplasm. It localises to the cytoskeleton. Its subcellular location is the myofibril. The protein localises to the stress fiber. Control of actomyosin interactions in smooth muscle and nonmuscle cells (could act as a bridge between myosin and actin filaments). Inhibits the actin-activated ATPase of myosin this inhibition is attenuated by calcium-calmodulin and is potentiated by tropomyosin. Interacts with actin, myosin, 2 molecules of tropomyosin and with calmodulin. The protein is Caldesmon, smooth muscle (CALD1) of Meleagris gallopavo (Wild turkey).